The sequence spans 203 residues: dITP/XTP pyrophosphatase (203 aa).

8-13 (TANKGK) contributes to the substrate binding site. Mg(2+)-binding residues include E41 and D70. Residue D70 is the Proton acceptor of the active site. Substrate-binding positions include S71, 153–156 (FGYD), K176, and 181–182 (HR).

Belongs to the HAM1 NTPase family. As to quaternary structure, homodimer. Requires Mg(2+) as cofactor.

It catalyses the reaction XTP + H2O = XMP + diphosphate + H(+). It carries out the reaction dITP + H2O = dIMP + diphosphate + H(+). The enzyme catalyses ITP + H2O = IMP + diphosphate + H(+). Functionally, pyrophosphatase that catalyzes the hydrolysis of nucleoside triphosphates to their monophosphate derivatives, with a high preference for the non-canonical purine nucleotides XTP (xanthosine triphosphate), dITP (deoxyinosine triphosphate) and ITP. Seems to function as a house-cleaning enzyme that removes non-canonical purine nucleotides from the nucleotide pool, thus preventing their incorporation into DNA/RNA and avoiding chromosomal lesions. The chain is dITP/XTP pyrophosphatase from Listeria monocytogenes serovar 1/2a (strain ATCC BAA-679 / EGD-e).